We begin with the raw amino-acid sequence, 148 residues long: Cytochrome c-type biogenesis protein CcmE (148 aa).

The Cytoplasmic segment spans residues 1-7; it reads MKPRSKR. A helical; Signal-anchor for type II membrane protein membrane pass occupies residues 8–28; it reads LLLVAGAVALLVGAVALVLNA. The Periplasmic segment spans residues 29–148; the sequence is FQQNLVFFHT…AQKAAQTVQQ (120 aa). 2 residues coordinate heme: histidine 123 and tyrosine 127.

Belongs to the CcmE/CycJ family.

The protein resides in the cell inner membrane. In terms of biological role, heme chaperone required for the biogenesis of c-type cytochromes. Transiently binds heme delivered by CcmC and transfers the heme to apo-cytochromes in a process facilitated by CcmF and CcmH. This chain is Cytochrome c-type biogenesis protein CcmE, found in Aromatoleum aromaticum (strain DSM 19018 / LMG 30748 / EbN1) (Azoarcus sp. (strain EbN1)).